The following is an 85-amino-acid chain: Large ribosomal subunit protein bL27 (85 aa).

The segment at 1-22 (MAHKKAGGSTRNGRDSESKRLG) is disordered.

The protein belongs to the bacterial ribosomal protein bL27 family.

This is Large ribosomal subunit protein bL27 from Aliivibrio fischeri (strain ATCC 700601 / ES114) (Vibrio fischeri).